The chain runs to 65 residues: Toxin VmKTx1 (65 aa).

The first 21 residues, 1-21, serve as a signal peptide directing secretion; that stretch reads MKTSCLLTILLLSFLVAVAVA. Residues 22 to 28 constitute a propeptide that is removed on maturation; that stretch reads EGERSAR. Disulfide bonds link C34/C54, C40/C59, C44/C61, and C49/C64. Cysteine amide is present on C64.

Belongs to the short scorpion toxin superfamily. Potassium channel inhibitor family. Alpha-KTx 23 subfamily. Expressed by the venom gland.

It is found in the secreted. Functionally, voltage-gated potassium channel inhibitor. Selectively and reversibly binds (Kd=0.77 nM) and blocks hKv1.3/KCNA3 potassium channels of human T-lymphocytes. Also shows a very weak effect on hKv1.2/KCNA2 (Kd=7.1 uM). Also reduces the fraction of CD40L expressing T cells that are stimulated by alphaCD3/alphaCD28. The polypeptide is Toxin VmKTx1 (Vaejovis mexicanus smithi (Mexican scorpion)).